The chain runs to 205 residues: NADH-quinone oxidoreductase subunit C (205 aa).

The protein belongs to the complex I 30 kDa subunit family. In terms of assembly, NDH-1 is composed of 14 different subunits. Subunits NuoB, C, D, E, F, and G constitute the peripheral sector of the complex.

Its subcellular location is the cell inner membrane. It catalyses the reaction a quinone + NADH + 5 H(+)(in) = a quinol + NAD(+) + 4 H(+)(out). Functionally, NDH-1 shuttles electrons from NADH, via FMN and iron-sulfur (Fe-S) centers, to quinones in the respiratory chain. The immediate electron acceptor for the enzyme in this species is believed to be ubiquinone. Couples the redox reaction to proton translocation (for every two electrons transferred, four hydrogen ions are translocated across the cytoplasmic membrane), and thus conserves the redox energy in a proton gradient. The polypeptide is NADH-quinone oxidoreductase subunit C (Nitrosospira multiformis (strain ATCC 25196 / NCIMB 11849 / C 71)).